We begin with the raw amino-acid sequence, 392 residues long: S-adenosylmethionine synthase (392 aa).

Residue His-20 participates in ATP binding. Asp-22 serves as a coordination point for Mg(2+). A K(+)-binding site is contributed by Glu-48. Positions 61 and 106 each coordinate L-methionine. The flexible loop stretch occupies residues 106–116; the sequence is QSRDIINAIEK. ATP is bound by residues 171 to 173, Asp-248, 254 to 255, Ala-271, and Lys-275; these read DSK and RK. Asp-248 is an L-methionine binding site. Lys-279 lines the L-methionine pocket.

The protein belongs to the AdoMet synthase family. As to quaternary structure, homotetramer; dimer of dimers. The cofactor is Mg(2+). Requires K(+) as cofactor.

It is found in the cytoplasm. The enzyme catalyses L-methionine + ATP + H2O = S-adenosyl-L-methionine + phosphate + diphosphate. It participates in amino-acid biosynthesis; S-adenosyl-L-methionine biosynthesis; S-adenosyl-L-methionine from L-methionine: step 1/1. Its function is as follows. Catalyzes the formation of S-adenosylmethionine (AdoMet) from methionine and ATP. The overall synthetic reaction is composed of two sequential steps, AdoMet formation and the subsequent tripolyphosphate hydrolysis which occurs prior to release of AdoMet from the enzyme. The polypeptide is S-adenosylmethionine synthase (Borreliella burgdorferi (strain ATCC 35210 / DSM 4680 / CIP 102532 / B31) (Borrelia burgdorferi)).